Reading from the N-terminus, the 101-residue chain is AFA-III adhesin operon regulatory protein (101 aa).

In terms of biological role, regulates the transcription of genes involved in the biosynthesis of afimbrial adhesin-III. The polypeptide is AFA-III adhesin operon regulatory protein (afaA) (Escherichia coli).